A 143-amino-acid polypeptide reads, in one-letter code: Transcriptional regulator MraZ (143 aa).

SpoVT-AbrB domains follow at residues 5-47 and 76-119; these read SHAP…PMAE and AADD…DAQR.

Belongs to the MraZ family. In terms of assembly, forms oligomers.

Its subcellular location is the cytoplasm. The protein localises to the nucleoid. The chain is Transcriptional regulator MraZ from Frankia casuarinae (strain DSM 45818 / CECT 9043 / HFP020203 / CcI3).